A 306-amino-acid polypeptide reads, in one-letter code: Ectoine dioxygenase (306 aa).

Glutamine 127 contributes to the L-ectoine binding site. Lysine 133 serves as a coordination point for 2-oxoglutarate. 3 residues coordinate Fe cation: histidine 144, aspartate 146, and histidine 245.

The protein belongs to the PhyH family. EctD subfamily. In terms of assembly, homodimer. The cofactor is Fe(2+).

It catalyses the reaction L-ectoine + 2-oxoglutarate + O2 = 5-hydroxyectoine + succinate + CO2. Functionally, involved in the biosynthesis of 5-hydroxyectoine, called compatible solute, which helps organisms to survive extreme osmotic stress by acting as a highly soluble organic osmolyte. Catalyzes the 2-oxoglutarate-dependent selective hydroxylation of L-ectoine to yield (4S,5S)-5-hydroxyectoine. The polypeptide is Ectoine dioxygenase (Sphingopyxis alaskensis (strain DSM 13593 / LMG 18877 / RB2256) (Sphingomonas alaskensis)).